The primary structure comprises 556 residues: Putative solute carrier family 22 member 31 (556 aa).

Over 1–23 (MEQEARVLRAAGGFGRARRLLAS) the chain is Cytoplasmic. A helical transmembrane segment spans residues 24–44 (ASWVPCIVLGLVLSSEELLTA). Topologically, residues 45-128 (QPAPHCRPDP…WNLVCGDGWK (84 aa)) are extracellular. The chain crosses the membrane as a helical span at residues 129–149 (VPLEQVSHLLGWLLGCVILGA). Over 150-157 (GCDRFGRR) the chain is Cytoplasmic. The chain crosses the membrane as a helical span at residues 158–178 (AVFVASLVLTTGLGASEALAA). At 179 to 182 (SFPT) the chain is on the extracellular side. Residues 183-203 (LLVLRLLHGGTLAGALLALYL) traverse the membrane as a helical segment. The Cytoplasmic segment spans residues 204–218 (ARLELCDPPHRLAFS). Residues 219 to 239 (MGAGLFSVVGTLLLPGLAALV) form a helical membrane-spanning segment. The Extracellular portion of the chain corresponds to 240–246 (QDWRLLQ). Residues 247 to 267 (GLGALMSGLLLLFWGFPALFP) form a helical membrane-spanning segment. Residues 268–339 (ESPCWLLATG…LRTRVTWRNG (72 aa)) are Cytoplasmic-facing. Residues 340 to 357 (LILGFSSLVGGGIRASFR) form a helical membrane-spanning segment. Residues 358–366 (RSLAPQVPT) are Extracellular-facing. Residues 367–387 (FYLPYFLEAGLEAAALVFLLL) form a helical membrane-spanning segment. The Cytoplasmic segment spans residues 388–395 (TADCCGRR). The helical transmembrane segment at 396 to 416 (PVLLLGTMVTGLASLLLLAGA) threads the bilayer. The Extracellular portion of the chain corresponds to 417 to 420 (QYLP). Residues 421-441 (GWTVLFLSVLGLLASRAVSAL) traverse the membrane as a helical segment. Topologically, residues 442-448 (SSLFAAE) are cytoplasmic. A helical membrane pass occupies residues 449 to 469 (VFPTVIRGAGLGLVLGAGFLG). Over 470-483 (QAAGPLDTLHGRQG) the chain is Extracellular. The chain crosses the membrane as a helical span at residues 484–504 (FFLQQVVFASLAVLALLCVLL). The Cytoplasmic portion of the chain corresponds to 505-556 (LPESRSRGLPQSLQDADRLRRSPLLRGRPRQDHLPLLPPSNSYWAGHTPEQH). The interval 524–556 (RRSPLLRGRPRQDHLPLLPPSNSYWAGHTPEQH) is disordered.

Belongs to the major facilitator (TC 2.A.1) superfamily. Organic cation transporter (TC 2.A.1.19) family.

The protein resides in the membrane. Its function is as follows. Organic anion transporter that mediates the uptake of ions. In Homo sapiens (Human), this protein is Putative solute carrier family 22 member 31.